We begin with the raw amino-acid sequence, 317 residues long: Transaldolase (317 aa).

Lys-132 functions as the Schiff-base intermediate with substrate in the catalytic mechanism.

The protein belongs to the transaldolase family. Type 1 subfamily. Homodimer.

The protein resides in the cytoplasm. The catalysed reaction is D-sedoheptulose 7-phosphate + D-glyceraldehyde 3-phosphate = D-erythrose 4-phosphate + beta-D-fructose 6-phosphate. It functions in the pathway carbohydrate degradation; pentose phosphate pathway; D-glyceraldehyde 3-phosphate and beta-D-fructose 6-phosphate from D-ribose 5-phosphate and D-xylulose 5-phosphate (non-oxidative stage): step 2/3. Functionally, transaldolase is important for the balance of metabolites in the pentose-phosphate pathway. The protein is Transaldolase (talB) of Escherichia coli O104:H4 (strain 2009EL-2071).